Consider the following 153-residue polypeptide: Aspartate carbamoyltransferase regulatory chain (153 aa).

4 residues coordinate Zn(2+): Cys-109, Cys-114, Cys-138, and Cys-141.

The protein belongs to the PyrI family. As to quaternary structure, contains catalytic and regulatory chains. The cofactor is Zn(2+).

Involved in allosteric regulation of aspartate carbamoyltransferase. This is Aspartate carbamoyltransferase regulatory chain from Nitrosopumilus maritimus (strain SCM1).